We begin with the raw amino-acid sequence, 79 residues long: Conotoxin VnMSGL-0122 (79 aa).

A signal peptide spans 1–20 (MSGLGIMVLALLLLVFMATS). A propeptide spanning residues 21 to 44 (HQDGGGKQATQRDAINVRRRRSIT) is cleaved from the precursor. 3 disulfide bridges follow: Cys52–Cys64, Cys56–Cys73, and Cys63–Cys77. Leu78 bears the Leucine amide mark.

Belongs to the conotoxin O3 superfamily. Expressed by the venom duct.

The protein localises to the secreted. This chain is Conotoxin VnMSGL-0122, found in Conus ventricosus (Mediterranean cone).